Consider the following 343-residue polypeptide: Arginine-hydroxylase NDUFAF5, mitochondrial (343 aa).

Residues 1 to 29 (MLRKVVLLRLCPLLGRPAVSASSGSRREV) constitute a mitochondrion transit peptide.

It belongs to the methyltransferase superfamily. In terms of assembly, interacts with NDUFAF8, leading to stabilize NDUFAF5. Interacts with NDUFS7. Interacts with PYURF (via TRM112 domain); the interaction is direct and stabilizes NDUFAF5 protein.

Its subcellular location is the mitochondrion inner membrane. Arginine hydroxylase that mediates hydroxylation of 'Arg-122' of NDUFS7 and is involved in the assembly of mitochondrial NADH:ubiquinone oxidoreductase complex (complex I, MT-ND1) at early stages. May also have methyltransferase activity. The chain is Arginine-hydroxylase NDUFAF5, mitochondrial from Mus musculus (Mouse).